A 345-amino-acid polypeptide reads, in one-letter code: 4-hydroxythreonine-4-phosphate dehydrogenase (345 aa).

Positions 148 and 149 each coordinate substrate. A divalent metal cation-binding residues include histidine 182, histidine 227, and histidine 282. The substrate site is built by lysine 290, asparagine 299, and arginine 308.

This sequence belongs to the PdxA family. As to quaternary structure, homodimer. The cofactor is Zn(2+). It depends on Mg(2+) as a cofactor. Co(2+) is required as a cofactor.

The protein resides in the cytoplasm. The catalysed reaction is 4-(phosphooxy)-L-threonine + NAD(+) = 3-amino-2-oxopropyl phosphate + CO2 + NADH. Its pathway is cofactor biosynthesis; pyridoxine 5'-phosphate biosynthesis; pyridoxine 5'-phosphate from D-erythrose 4-phosphate: step 4/5. In terms of biological role, catalyzes the NAD(P)-dependent oxidation of 4-(phosphooxy)-L-threonine (HTP) into 2-amino-3-oxo-4-(phosphooxy)butyric acid which spontaneously decarboxylates to form 3-amino-2-oxopropyl phosphate (AHAP). The chain is 4-hydroxythreonine-4-phosphate dehydrogenase from Bradyrhizobium diazoefficiens (strain JCM 10833 / BCRC 13528 / IAM 13628 / NBRC 14792 / USDA 110).